Consider the following 116-residue polypeptide: MGAMAEIQFIRGINEEVVPDVRLTRARDGSSGQAMFYFDNPKIVQEGNLEVTGMYMVDEEGEIVTRDVNAKFINGQPVAIEATYTMRSPQEWDRFIRFMDRYAASHGLGFQKSENS.

This sequence belongs to the Psb28 family. As to quaternary structure, part of a photosystem II (PSII) assembly intermediate complex PSII-I; crystallized from a strain deleted of psbJ, it forms monomeric PSII before addition of the oxygen evolving complex. PSII-I includes 3 assembly factors not found in mature PSII (Psb27, Psb28 and Psb34). This protein binds to the cytoplasmic face of D1 and D2 (psbA and psbD), contacting CP47 (psbB) directly above the quinone b-binding site.

The protein localises to the cellular thylakoid membrane. In terms of biological role, a photosystem II (PSII) assembly factor that binds PSII during biogenesis, protecting the complex until water splitting is activated. The sequence is that of Photosystem II assembly factor Psb28 protein from Thermosynechococcus vestitus (strain NIES-2133 / IAM M-273 / BP-1).